The sequence spans 222 residues: Ribosomal RNA small subunit methyltransferase G (222 aa).

S-adenosyl-L-methionine-binding positions include Gly-85, Leu-90, 108–110 (DAT), 136–137 (VE), and Arg-150.

It belongs to the methyltransferase superfamily. RNA methyltransferase RsmG family.

It localises to the cytoplasm. Specifically methylates the N7 position of a guanine in 16S rRNA. The protein is Ribosomal RNA small subunit methyltransferase G of Chlorobium phaeobacteroides (strain DSM 266 / SMG 266 / 2430).